We begin with the raw amino-acid sequence, 740 residues long: Alpha-1,6-mannosylglycoprotein 6-beta-N-acetylglucosaminyltransferase A (740 aa).

The Cytoplasmic portion of the chain corresponds to 1-13 (MAFFSPWKLSSQK). The helical; Signal-anchor for type II membrane protein transmembrane segment at 14–30 (LGFFLVTFGFIWGMMLL) threads the bilayer. Residues 31-740 (HFTIQQRTQP…GQVALCKDCL (710 aa)) are Lumenal-facing. Asparagine 109, asparagine 114, and asparagine 117 each carry an N-linked (GlcNAc...) asparagine glycan. Disulfide bonds link cysteine 144–cysteine 182, cysteine 155–cysteine 195, cysteine 171–cysteine 337, cysteine 371–cysteine 625, cysteine 648–cysteine 723, cysteine 652–cysteine 725, cysteine 659–cysteine 712, cysteine 680–cysteine 701, and cysteine 736–cysteine 739. A sufficient for catalytic activity region spans residues 212–740 (NSLAEIRTDF…GQVALCKDCL (529 aa)). Asparagine 333 carries an N-linked (GlcNAc...) asparagine glycan. Residue 377 to 378 (DS) participates in substrate binding. N-linked (GlcNAc...) asparagine glycosylation is found at asparagine 432 and asparagine 446. Position 525 (glutamate 525) interacts with UDP-N-acetyl-alpha-D-glucosamine. A substrate-binding site is contributed by lysine 553.

It belongs to the glycosyltransferase 18 family. Post-translationally, N-glycosylated. In terms of processing, a secreted form is released from the membrane after cleavage by gamma-secretase. Detected in cerebellum.

The protein localises to the golgi apparatus membrane. The protein resides in the perikaryon. It is found in the secreted. It carries out the reaction N(4)-{beta-D-GlcNAc-(1-&gt;2)-[beta-D-GlcNAc-(1-&gt;4)]-alpha-D-Man-(1-&gt;3)-[beta-D-GlcNAc-(1-&gt;2)-alpha-D-Man-(1-&gt;6)]-beta-D-Man-(1-&gt;4)-beta-D-GlcNAc-(1-&gt;4)-beta-D-GlcNAc}-L-asparaginyl-[protein] + UDP-N-acetyl-alpha-D-glucosamine = N(4)-{beta-D-GlcNAc-(1-&gt;2)-[beta-D-GlcNAc-(1-&gt;4)]-alpha-D-Man-(1-&gt;3)-[beta-D-GlcNAc-(1-&gt;2)-[beta-D-GlcNAc-(1-&gt;6)]-alpha-D-Man-(1-&gt;6)]-beta-D-Man-(1-&gt;4)-beta-D-GlcNAc-(1-&gt;4)-beta-D-GlcNAc}-L-asparaginyl-[protein] + UDP + H(+). It functions in the pathway protein modification; protein glycosylation. Functionally, catalyzes the addition of N-acetylglucosamine (GlcNAc) in beta 1-6 linkage to the alpha-linked mannose of biantennary N-linked oligosaccharides. Catalyzes an important step in the biosynthesis of branched, complex-type N-glycans, such as those found on EGFR, TGFR (TGF-beta receptor) and CDH2. Via its role in the biosynthesis of complex N-glycans, plays an important role in the activation of cellular signaling pathways, reorganization of the actin cytoskeleton, cell-cell adhesion and cell migration. MGAT5-dependent EGFR N-glycosylation enhances the interaction between EGFR and LGALS3 and thereby prevents rapid EGFR endocytosis and prolongs EGFR signaling. Required for efficient interaction between TGFB1 and its receptor. Enhances activation of intracellular signaling pathways by several types of growth factors, including FGF2, PDGF, IGF, TGFB1 and EGF. MGAT5-dependent CDH2 N-glycosylation inhibits CDH2-mediated homotypic cell-cell adhesion and contributes to the regulation of downstream signaling pathways. Promotes cell migration. Contributes to the regulation of the inflammatory response. MGAT5-dependent TCR N-glycosylation enhances the interaction between TCR and LGALS3, limits agonist-induced TCR clustering, and thereby dampens TCR-mediated responses to antigens. Required for normal leukocyte evasation and accumulation at sites of inflammation. Inhibits attachment of monocytes to the vascular endothelium and subsequent monocyte diapedesis. Its function is as follows. Promotes proliferation of umbilical vein endothelial cells and angiogenesis, at least in part by promoting the release of the growth factor FGF2 from the extracellular matrix. In Mus musculus (Mouse), this protein is Alpha-1,6-mannosylglycoprotein 6-beta-N-acetylglucosaminyltransferase A (Mgat5).